The chain runs to 465 residues: Cytochrome P450 85A2 (465 aa).

A helical membrane pass occupies residues 2-22 (GIMMMILGLLVIIVCLCTALL). Position 415 (C415) interacts with heme. C462 carries S-farnesyl cysteine lipidation. Positions 462–465 (CSPY) match the Farnesylation CAAX motif motif.

Belongs to the cytochrome P450 family. The cofactor is heme. In terms of processing, isoprenylated (farnesylated); this addition of a 15-carbon farnesyl isoprenoid to the carboxy terminus is required for endoplasmic reticulum localization and essential for the biosynthesis of brassinolide. Expressed in stems, hypocotyls, leaves, siliques, shoots, and roots, with a higher expression in apical shoots.

It localises to the membrane. The protein resides in the endoplasmic reticulum. It catalyses the reaction 6-deoxoteasterone + reduced [NADPH--hemoprotein reductase] + O2 = 6alpha-hydroxyteasterone + oxidized [NADPH--hemoprotein reductase] + H2O + H(+). The catalysed reaction is 6alpha-hydroxytyphasterol + reduced [NADPH--hemoprotein reductase] + O2 = teasterone + oxidized [NADPH--hemoprotein reductase] + 2 H2O + H(+). It carries out the reaction 3-dehydro-6-deoxoteasterone + reduced [NADPH--hemoprotein reductase] + O2 = 3-dehydro-6alpha-hydroxyteasterone + oxidized [NADPH--hemoprotein reductase] + H2O + H(+). The enzyme catalyses 3-dehydro-6alpha-hydroxyteasterone + reduced [NADPH--hemoprotein reductase] + O2 = 3-dehydroteasterone + oxidized [NADPH--hemoprotein reductase] + 2 H2O + H(+). It catalyses the reaction 6-deoxotyphasterol + reduced [NADPH--hemoprotein reductase] + O2 = 6alpha-hydroxytyphasterol + oxidized [NADPH--hemoprotein reductase] + H2O + H(+). The catalysed reaction is 6alpha-hydroxytyphasterol + reduced [NADPH--hemoprotein reductase] + O2 = typhasterol + oxidized [NADPH--hemoprotein reductase] + 2 H2O + H(+). It carries out the reaction 6-deoxocastasterone + reduced [NADPH--hemoprotein reductase] + O2 = 6alpha-hydroxycastasterone + oxidized [NADPH--hemoprotein reductase] + H2O + H(+). The enzyme catalyses 6alpha-hydroxycastasterone + reduced [NADPH--hemoprotein reductase] + O2 = castasterone + oxidized [NADPH--hemoprotein reductase] + 2 H2O + H(+). It catalyses the reaction 6-deoxo-28-norteasterone + 2 reduced [NADPH--hemoprotein reductase] + 2 O2 = 28-norteasterone + 2 oxidized [NADPH--hemoprotein reductase] + 3 H2O + 2 H(+). The catalysed reaction is 6-deoxo-28-norteasterone + reduced [NADPH--hemoprotein reductase] + O2 = 6alpha-hydroxy-28-norteasterone + oxidized [NADPH--hemoprotein reductase] + H2O + H(+). It carries out the reaction 6alpha-hydroxy-28-norteasterone + reduced [NADPH--hemoprotein reductase] + O2 = 28-norteasterone + oxidized [NADPH--hemoprotein reductase] + 2 H2O + H(+). The enzyme catalyses 6-deoxo-28-nortyphasterol + 2 reduced [NADPH--hemoprotein reductase] + 2 O2 = 28-nortyphasterol + 2 oxidized [NADPH--hemoprotein reductase] + 3 H2O + 2 H(+). It catalyses the reaction 6-deoxo-28-nortyphasterol + reduced [NADPH--hemoprotein reductase] + O2 = 6alpha-hydroxy-28-nortyphasterol + oxidized [NADPH--hemoprotein reductase] + H2O + H(+). The catalysed reaction is 6alpha-hydroxy-28-nortyphasterol + reduced [NADPH--hemoprotein reductase] + O2 = 28-nortyphasterol + oxidized [NADPH--hemoprotein reductase] + 2 H2O + H(+). It carries out the reaction 6-deoxo-28-norcastasterone + 2 reduced [NADPH--hemoprotein reductase] + 2 O2 = 28-norcastasterone + 2 oxidized [NADPH--hemoprotein reductase] + 3 H2O + 2 H(+). The enzyme catalyses 6-deoxo-28-norcastasterone + reduced [NADPH--hemoprotein reductase] + O2 = 6alpha-hydroxy-28-norcastasterone + oxidized [NADPH--hemoprotein reductase] + H2O + H(+). It catalyses the reaction 6alpha-hydroxy-28-norcastasterone + reduced [NADPH--hemoprotein reductase] + O2 = 28-norcastasterone + oxidized [NADPH--hemoprotein reductase] + 2 H2O + H(+). The catalysed reaction is 3-dehydro-6-deoxo-28-norteasterone + 2 reduced [NADPH--hemoprotein reductase] + 2 O2 = 6-dehydro-28-norteasterone + 2 oxidized [NADPH--hemoprotein reductase] + 3 H2O + 2 H(+). It carries out the reaction 3-dehydro-6-deoxo-28-norteasterone + reduced [NADPH--hemoprotein reductase] + O2 = 3-dehydro-6alpha-hydroxy-28-norteasterone + oxidized [NADPH--hemoprotein reductase] + H2O + H(+). The enzyme catalyses 3-dehydro-6alpha-hydroxy-28-norteasterone + reduced [NADPH--hemoprotein reductase] + O2 = 6-dehydro-28-norteasterone + oxidized [NADPH--hemoprotein reductase] + 2 H2O + H(+). It catalyses the reaction teasterone + reduced [NADPH--hemoprotein reductase] + O2 = 7-oxateasterone + oxidized [NADPH--hemoprotein reductase] + H2O + H(+). The catalysed reaction is castasterone + reduced [NADPH--hemoprotein reductase] + O2 = brassinolide + oxidized [NADPH--hemoprotein reductase] + H2O + H(+). It carries out the reaction typhasterol + reduced [NADPH--hemoprotein reductase] + O2 = 7-oxatyphasterol + oxidized [NADPH--hemoprotein reductase] + H2O + H(+). The enzyme catalyses 6-deoxocastasterone + 2 reduced [NADPH--hemoprotein reductase] + 2 O2 = castasterone + 2 oxidized [NADPH--hemoprotein reductase] + 3 H2O + 2 H(+). It catalyses the reaction 6-deoxoteasterone + 2 reduced [NADPH--hemoprotein reductase] + 2 O2 = teasterone + 2 oxidized [NADPH--hemoprotein reductase] + 3 H2O + 2 H(+). The catalysed reaction is 6-deoxotyphasterol + 2 reduced [NADPH--hemoprotein reductase] + 2 O2 = typhasterol + 2 oxidized [NADPH--hemoprotein reductase] + 3 H2O + 2 H(+). It carries out the reaction 3-dehydro-6-deoxoteasterone + 2 reduced [NADPH--hemoprotein reductase] + 2 O2 = 3-dehydroteasterone + 2 oxidized [NADPH--hemoprotein reductase] + 3 H2O + 2 H(+). It functions in the pathway plant hormone biosynthesis; brassinosteroid biosynthesis. Its function is as follows. Mediates Baeyer-Villiger oxidation and catalyzes the C6-oxidation step and lactonization in brassinosteroids biosynthesis. Converts 6-deoxocastasterone (6-deoxoCS) to castasterone (CS), and castasterone to brassinolide (BL). May also convert 6-deoxoteasterone (6-deoxoTE) to teasterone (TE), 3-dehydro-6-deoxoteasterone (6-deoxo3DT, 6-deoxo-3-DHT) to 3-dehydroteasterone (3DT, 3-DHT), and 6-deoxotyphasterol (6-deoxoTY) to typhasterol (TY). Also seems to be able to convert teasterone (TE) and typhasterol (TY) to 7-oxateasterone (7-OXTE) and 7-oxatyphasterol (7-OXTY), respectively. Catalyzes the conversion of 6-deoxo-28-norteasterone (6-deoxo-28-norTE) to 28-norteasterone (28-norTE), 6-deoxo-28-nordeoxoteasterone (6-deoxo-28-nor-3-DHT) to 28-nordeoxoteasterone (28-nor-3-DHT), 6-deoxo-28-nortyphasterol (6-deoxo-28-norTY) to 28-nortyphasterol (28-norTY) and 6-deoxo-28-norcastasterone (6-deoxo-28-norCS) to 28-norcastasterone (28-norCS). Involved in a negative regulation of responses to abscisic acid (ABA) and drought tolerance. The chain is Cytochrome P450 85A2 (CYP85A2) from Arabidopsis thaliana (Mouse-ear cress).